The following is a 532-amino-acid chain: CTP synthase (532 aa).

The segment at 1-265 (MKYIVVTGGV…DEYLMRKLNL (265 aa)) is amidoligase domain. S12 contacts CTP. UTP is bound at residue S12. ATP is bound by residues 13–18 (GLGKGI) and D70. 2 residues coordinate Mg(2+): D70 and E140. CTP contacts are provided by residues 147-149 (DIE), 186-191 (KTKPTQ), and K222. Residues 186–191 (KTKPTQ) and K222 each bind UTP. Positions 289-529 (SIAIVGKYVD…VRAALKYRRE (241 aa)) constitute a Glutamine amidotransferase type-1 domain. G349 is a binding site for L-glutamine. C376 acts as the Nucleophile; for glutamine hydrolysis in catalysis. Residues 377–380 (FGFQ), E400, and R457 each bind L-glutamine. Active-site residues include H502 and E504.

This sequence belongs to the CTP synthase family. Homotetramer.

The enzyme catalyses UTP + L-glutamine + ATP + H2O = CTP + L-glutamate + ADP + phosphate + 2 H(+). It carries out the reaction L-glutamine + H2O = L-glutamate + NH4(+). It catalyses the reaction UTP + NH4(+) + ATP = CTP + ADP + phosphate + 2 H(+). It participates in pyrimidine metabolism; CTP biosynthesis via de novo pathway; CTP from UDP: step 2/2. With respect to regulation, allosterically activated by GTP, when glutamine is the substrate; GTP has no effect on the reaction when ammonia is the substrate. The allosteric effector GTP functions by stabilizing the protein conformation that binds the tetrahedral intermediate(s) formed during glutamine hydrolysis. Inhibited by the product CTP, via allosteric rather than competitive inhibition. Functionally, catalyzes the ATP-dependent amination of UTP to CTP with either L-glutamine or ammonia as the source of nitrogen. Regulates intracellular CTP levels through interactions with the four ribonucleotide triphosphates. The sequence is that of CTP synthase from Archaeoglobus fulgidus (strain ATCC 49558 / DSM 4304 / JCM 9628 / NBRC 100126 / VC-16).